The following is a 429-amino-acid chain: Dual-specificity RNA methyltransferase RlmN (429 aa).

A disordered region spans residues 1-23 (MRAMQTHTEIAPMPIPGHVDPVP). The active-site Proton acceptor is Glu128. A Radical SAM core domain is found at 134-397 (DADRGTLCVS…APVRTPRGRD (264 aa)). Cys141 and Cys402 are oxidised to a cystine. 3 residues coordinate [4Fe-4S] cluster: Cys148, Cys152, and Cys155. Residues 226–227 (GE), Ser258, 280–282 (SLH), and Asn359 each bind S-adenosyl-L-methionine. Cys402 serves as the catalytic S-methylcysteine intermediate.

It belongs to the radical SAM superfamily. RlmN family. Requires [4Fe-4S] cluster as cofactor.

It is found in the cytoplasm. It carries out the reaction adenosine(2503) in 23S rRNA + 2 reduced [2Fe-2S]-[ferredoxin] + 2 S-adenosyl-L-methionine = 2-methyladenosine(2503) in 23S rRNA + 5'-deoxyadenosine + L-methionine + 2 oxidized [2Fe-2S]-[ferredoxin] + S-adenosyl-L-homocysteine. The enzyme catalyses adenosine(37) in tRNA + 2 reduced [2Fe-2S]-[ferredoxin] + 2 S-adenosyl-L-methionine = 2-methyladenosine(37) in tRNA + 5'-deoxyadenosine + L-methionine + 2 oxidized [2Fe-2S]-[ferredoxin] + S-adenosyl-L-homocysteine. In terms of biological role, specifically methylates position 2 of adenine 2503 in 23S rRNA and position 2 of adenine 37 in tRNAs. m2A2503 modification seems to play a crucial role in the proofreading step occurring at the peptidyl transferase center and thus would serve to optimize ribosomal fidelity. The sequence is that of Dual-specificity RNA methyltransferase RlmN from Novosphingobium aromaticivorans (strain ATCC 700278 / DSM 12444 / CCUG 56034 / CIP 105152 / NBRC 16084 / F199).